The chain runs to 128 residues: Large ribosomal subunit protein bL17 (128 aa).

The protein belongs to the bacterial ribosomal protein bL17 family. Part of the 50S ribosomal subunit. Contacts protein L32.

In Glaesserella parasuis serovar 5 (strain SH0165) (Haemophilus parasuis), this protein is Large ribosomal subunit protein bL17.